The sequence spans 405 residues: Chorismate synthase (405 aa).

NADP(+)-binding residues include arginine 43 and arginine 49. Residues 138-140 (RAS) and 259-260 (QA) each bind FMN. The segment covering 275–286 (RRGSQAHDEMRP) has biased composition (basic and acidic residues). Residues 275–308 (RRGSQAHDEMRPGPDGVLRSTNRAGGLEGGMTNG) form a disordered region. FMN is bound by residues glycine 303, 318-322 (KPIST), and arginine 344.

Belongs to the chorismate synthase family. Homotetramer. Requires FMNH2 as cofactor.

The enzyme catalyses 5-O-(1-carboxyvinyl)-3-phosphoshikimate = chorismate + phosphate. It functions in the pathway metabolic intermediate biosynthesis; chorismate biosynthesis; chorismate from D-erythrose 4-phosphate and phosphoenolpyruvate: step 7/7. In terms of biological role, catalyzes the anti-1,4-elimination of the C-3 phosphate and the C-6 proR hydrogen from 5-enolpyruvylshikimate-3-phosphate (EPSP) to yield chorismate, which is the branch point compound that serves as the starting substrate for the three terminal pathways of aromatic amino acid biosynthesis. This reaction introduces a second double bond into the aromatic ring system. This chain is Chorismate synthase, found in Nocardia farcinica (strain IFM 10152).